A 76-amino-acid chain; its full sequence is Putative defensin-like protein 184 (76 aa).

The signal sequence occupies residues 1–21 (MKNSSILFVLIIVVFLISSSG). 4 cysteine pairs are disulfide-bonded: Cys-32–Cys-76, Cys-38–Cys-58, Cys-44–Cys-70, and Cys-48–Cys-72.

It belongs to the DEFL family.

Its subcellular location is the secreted. This chain is Putative defensin-like protein 184 (LCR18), found in Arabidopsis thaliana (Mouse-ear cress).